The primary structure comprises 176 residues: Probable inosine/xanthosine triphosphatase (176 aa).

Asp-36 lines the Mg(2+) pocket.

This sequence belongs to the YjjX NTPase family. As to quaternary structure, homodimer. Mg(2+) serves as cofactor. It depends on Mn(2+) as a cofactor.

The catalysed reaction is XTP + H2O = XDP + phosphate + H(+). The enzyme catalyses ITP + H2O = IDP + phosphate + H(+). Its function is as follows. Phosphatase that hydrolyzes non-canonical purine nucleotides such as XTP and ITP to their respective diphosphate derivatives. Probably excludes non-canonical purines from DNA/RNA precursor pool, thus preventing their incorporation into DNA/RNA and avoiding chromosomal lesions. This chain is Probable inosine/xanthosine triphosphatase, found in Saccharolobus islandicus (strain M.16.4 / Kamchatka #3) (Sulfolobus islandicus).